Consider the following 548-residue polypeptide: CTP synthase (548 aa).

Positions 1 to 267 (MKTKFIFITG…DQKIAIMLQL (267 aa)) are amidoligase domain. Serine 14 provides a ligand contact to CTP. Position 14 (serine 14) interacts with UTP. Residues 15–20 (SLGKGL) and aspartate 72 each bind ATP. Mg(2+) contacts are provided by aspartate 72 and glutamate 141. CTP contacts are provided by residues 148 to 150 (DIE), 188 to 193 (KTKPTQ), and lysine 224. Residues 188–193 (KTKPTQ) and lysine 224 contribute to the UTP site. Positions 292–545 (TIGIVGKYVD…IKAAGKQAVK (254 aa)) constitute a Glutamine amidotransferase type-1 domain. Position 354 (glycine 354) interacts with L-glutamine. The Nucleophile; for glutamine hydrolysis role is filled by cysteine 381. Residues 382–385 (LGMQ), glutamate 405, and arginine 473 contribute to the L-glutamine site. Residues histidine 518 and glutamate 520 contribute to the active site.

The protein belongs to the CTP synthase family. As to quaternary structure, homotetramer.

The catalysed reaction is UTP + L-glutamine + ATP + H2O = CTP + L-glutamate + ADP + phosphate + 2 H(+). The enzyme catalyses L-glutamine + H2O = L-glutamate + NH4(+). It catalyses the reaction UTP + NH4(+) + ATP = CTP + ADP + phosphate + 2 H(+). Its pathway is pyrimidine metabolism; CTP biosynthesis via de novo pathway; CTP from UDP: step 2/2. Its activity is regulated as follows. Allosterically activated by GTP, when glutamine is the substrate; GTP has no effect on the reaction when ammonia is the substrate. The allosteric effector GTP functions by stabilizing the protein conformation that binds the tetrahedral intermediate(s) formed during glutamine hydrolysis. Inhibited by the product CTP, via allosteric rather than competitive inhibition. Functionally, catalyzes the ATP-dependent amination of UTP to CTP with either L-glutamine or ammonia as the source of nitrogen. Regulates intracellular CTP levels through interactions with the four ribonucleotide triphosphates. The sequence is that of CTP synthase from Oleidesulfovibrio alaskensis (strain ATCC BAA-1058 / DSM 17464 / G20) (Desulfovibrio alaskensis).